Here is a 349-residue protein sequence, read N- to C-terminus: S-adenosylmethionine:tRNA ribosyltransferase-isomerase (349 aa).

It belongs to the QueA family. As to quaternary structure, monomer.

The protein localises to the cytoplasm. The catalysed reaction is 7-aminomethyl-7-carbaguanosine(34) in tRNA + S-adenosyl-L-methionine = epoxyqueuosine(34) in tRNA + adenine + L-methionine + 2 H(+). It participates in tRNA modification; tRNA-queuosine biosynthesis. Transfers and isomerizes the ribose moiety from AdoMet to the 7-aminomethyl group of 7-deazaguanine (preQ1-tRNA) to give epoxyqueuosine (oQ-tRNA). In Pseudomonas putida (strain GB-1), this protein is S-adenosylmethionine:tRNA ribosyltransferase-isomerase.